The chain runs to 256 residues: H-2 class II histocompatibility antigen, A-D alpha chain (256 aa).

A signal peptide spans 1–23 (MPCSRALILGVLALNTMLSLCGG). The tract at residues 24-111 (EDDIEADHVG…KRSNFTPATN (88 aa)) is alpha-1. At 24–218 (EDDIEADHVG…IPAPMSELTE (195 aa)) the chain is on the extracellular side. The interval 112-205 (EAPQATVFPK…GLEEPVLKHW (94 aa)) is alpha-2. One can recognise an Ig-like C1-type domain in the interval 114 to 206 (PQATVFPKSP…LEEPVLKHWE (93 aa)). C134 and C190 are disulfide-bonded. Residue N145 is glycosylated (N-linked (GlcNAc...) asparagine). The connecting peptide stretch occupies residues 206–218 (EPEIPAPMSELTE). Residues 219-244 (TVVCALGLSVGLVGIVVGTIFIIQGL) form a helical membrane-spanning segment. At 245 to 256 (RSGGTSRHPGPL) the chain is on the cytoplasmic side.

It belongs to the MHC class II family.

It is found in the membrane. This chain is H-2 class II histocompatibility antigen, A-D alpha chain (H2-Aa), found in Mus musculus (Mouse).